We begin with the raw amino-acid sequence, 320 residues long: Undecaprenyl-diphosphatase (320 aa).

8 consecutive transmembrane segments (helical) span residues 9-29 (FVLVSAVSAALSVVLFPLEVF), 82-102 (GVAFTAIIQLGSIAAVLWYFW), 130-150 (LGIILGTIPIVFFGLLIKKLI), 161-181 (LGAIAVASIVMSLLLGVGEKL), 191-211 (LTMQDGLLMGLAQALALIPGV), 236-256 (FLLGIPAITLAGLVELKDVFA), 265-285 (LPLIVGVISAAIFSYMAIAGL), and 296-316 (VFIWYRLVFGIAILGAISAGI).

It belongs to the UppP family.

It is found in the cell inner membrane. It catalyses the reaction di-trans,octa-cis-undecaprenyl diphosphate + H2O = di-trans,octa-cis-undecaprenyl phosphate + phosphate + H(+). Its function is as follows. Catalyzes the dephosphorylation of undecaprenyl diphosphate (UPP). Confers resistance to bacitracin. In Trichormus variabilis (strain ATCC 29413 / PCC 7937) (Anabaena variabilis), this protein is Undecaprenyl-diphosphatase.